The chain runs to 194 residues: Protein GrpE (194 aa).

Belongs to the GrpE family. In terms of assembly, homodimer.

It is found in the cytoplasm. Its function is as follows. Participates actively in the response to hyperosmotic and heat shock by preventing the aggregation of stress-denatured proteins, in association with DnaK and GrpE. It is the nucleotide exchange factor for DnaK and may function as a thermosensor. Unfolded proteins bind initially to DnaJ; upon interaction with the DnaJ-bound protein, DnaK hydrolyzes its bound ATP, resulting in the formation of a stable complex. GrpE releases ADP from DnaK; ATP binding to DnaK triggers the release of the substrate protein, thus completing the reaction cycle. Several rounds of ATP-dependent interactions between DnaJ, DnaK and GrpE are required for fully efficient folding. In Aliivibrio salmonicida (strain LFI1238) (Vibrio salmonicida (strain LFI1238)), this protein is Protein GrpE.